The following is a 216-amino-acid chain: ATP synthase subunit a (216 aa).

The next 7 membrane-spanning stretches (helical) occupy residues 1–21 (MEYS…IFVL), 62–82 (LIAA…VPGF), 88–108 (NINT…FEGF), 119–139 (FMGP…ISHI), 149–169 (LFAN…LVIK), 174–194 (LVVS…AIFI), and 196–216 (TYIF…HEEH).

Belongs to the ATPase A chain family. F-type ATPases have 2 components, CF(1) - the catalytic core - and CF(0) - the membrane proton channel. CF(1) has five subunits: alpha(3), beta(3), gamma(1), delta(1), epsilon(1). CF(0) has three main subunits: a(1), b(2) and c(9-12). The alpha and beta chains form an alternating ring which encloses part of the gamma chain. CF(1) is attached to CF(0) by a central stalk formed by the gamma and epsilon chains, while a peripheral stalk is formed by the delta and b chains.

The protein resides in the cell inner membrane. Its function is as follows. Key component of the proton channel; it plays a direct role in the translocation of protons across the membrane. The polypeptide is ATP synthase subunit a (Aquifex aeolicus (strain VF5)).